We begin with the raw amino-acid sequence, 134 residues long: Lymphocyte antigen 6G (134 aa).

The first 26 residues, 1-26 (MDTCHIAKSCVLILLVVLLCAERAQG), serve as a signal peptide directing secretion. The 92-residue stretch at 27-118 (LECYNCIGVP…PTGGSSWTMA (92 aa)) folds into the UPAR/Ly6 domain. Intrachain disulfides connect Cys-29-Cys-53, Cys-32-Cys-41, Cys-46-Cys-74, Cys-78-Cys-98, and Cys-99-Cys-104. The GPI-anchor amidated asparagine moiety is linked to residue Asn-105. A propeptide spans 106-134 (AAVPTGGSSWTMAGVLLFSLVSVLLQTFL) (removed in mature form).

Expressed in bone marrow.

It localises to the cell membrane. In Mus musculus (Mouse), this protein is Lymphocyte antigen 6G (Ly6g).